The sequence spans 405 residues: SPbeta prophage-derived uncharacterized protein YonJ (405 aa).

Residues D72 to E101 adopt a coiled-coil conformation.

This Bacillus subtilis (strain 168) protein is SPbeta prophage-derived uncharacterized protein YonJ (yonJ).